Consider the following 166-residue polypeptide: Probable chemoreceptor glutamine deamidase CheD (166 aa).

This sequence belongs to the CheD family.

It carries out the reaction L-glutaminyl-[protein] + H2O = L-glutamyl-[protein] + NH4(+). Functionally, probably deamidates glutamine residues to glutamate on methyl-accepting chemotaxis receptors (MCPs), playing an important role in chemotaxis. The protein is Probable chemoreceptor glutamine deamidase CheD of Clostridium acetobutylicum (strain ATCC 824 / DSM 792 / JCM 1419 / IAM 19013 / LMG 5710 / NBRC 13948 / NRRL B-527 / VKM B-1787 / 2291 / W).